Consider the following 68-residue polypeptide: uncharacterized protein (68 aa).

To bacterial proteins yidD.

This is an uncharacterized protein from Haemophilus influenzae (Bacteriophage HP1).